Here is a 3085-residue protein sequence, read N- to C-terminus: Genome polyprotein (3085 aa).

Residues 170–313 (LVAKSDFDDL…AGDVGRTMHY (144 aa)) form the Peptidase S30 domain. Active-site for P1 proteinase activity residues include histidine 224, glutamate 233, and serine 266. The Involved in interaction with stylet and aphid transmission motif lies at 365 to 368 (KMAC). Positions 622-624 (PTK) match the Involved in virions binding and aphid transmission motif. A Peptidase C6 domain is found at 648-770 (MYIAKEGYCY…EGEMKWYRVG (123 aa)). Residues cysteine 656 and histidine 729 each act as for helper component proteinase activity in the active site. A Helicase ATP-binding domain is found at 1241–1393 (TICASSEQEF…TQHDVLIKIE (153 aa)). 1254–1261 (GAVGSGKS) lines the ATP pocket. The DESH box signature appears at 1343–1346 (DESH). The 160-residue stretch at 1412-1571 (DVVQNGDNIL…NLPVMTHNVT (160 aa)) folds into the Helicase C-terminal domain. The Nuclear localization signal signature appears at 1895–1904 (ERGKRKGNNS). Residue tyrosine 1919 is modified to O-(5'-phospho-RNA)-tyrosine. The Peptidase C4 domain maps to 2047–2266 (GKSIVKGLRN…VAWNGMTLRE (220 aa)). Active-site for nuclear inclusion protein A activity residues include histidine 2092, aspartate 2127, and cysteine 2198. The 125-residue stretch at 2535 to 2659 (WIYCDADGSQ…AIYPSKEKFL (125 aa)) folds into the RdRp catalytic domain. A disordered region spans residues 2801–2869 (DGPDIVTYQG…STAVPRLKQI (69 aa)). Low complexity predominate over residues 2816–2831 (KSSQPQSSSPQVPQQV). Residues 2839-2855 (GRDKQSVIKHDSTKSKD) show a composition bias toward basic and acidic residues. Threonine 3068 carries the phosphothreonine modification.

It belongs to the potyviridae genome polyprotein family. Interacts with host eIF4E protein (via cap-binding region); this interaction mediates the translation of the VPg-viral RNA conjugates. Part of a complex that comprises VPg, RNA, host EIF4E and EIF4G; this interaction mediates the translation of the VPg-viral RNA conjugates. Post-translationally, VPg is uridylylated by the polymerase and is covalently attached to the 5'-end of the genomic RNA. This uridylylated form acts as a nucleotide-peptide primer for the polymerase. Potyviral RNA is expressed as two polyproteins which undergo post-translational proteolytic processing. Genome polyprotein is processed by NIa-pro, P1 and HC-pro proteinases resulting in the production of at least ten individual proteins. P3N-PIPO polyprotein is cleaved by P1 and HC-pro proteinases resulting in the production of three individual proteins. The P1 proteinase and the HC-pro cleave only their respective C-termini autocatalytically. 6K1 is essential for proper proteolytic separation of P3 from CI.

It localises to the host cytoplasmic vesicle. It is found in the host nucleus. The protein resides in the virion. It carries out the reaction RNA(n) + a ribonucleoside 5'-triphosphate = RNA(n+1) + diphosphate. The enzyme catalyses Hydrolyzes glutaminyl bonds, and activity is further restricted by preferences for the amino acids in P6 - P1' that vary with the species of potyvirus, e.g. Glu-Xaa-Xaa-Tyr-Xaa-Gln-|-(Ser or Gly) for the enzyme from tobacco etch virus. The natural substrate is the viral polyprotein, but other proteins and oligopeptides containing the appropriate consensus sequence are also cleaved.. The catalysed reaction is Hydrolyzes a Gly-|-Gly bond at its own C-terminus, commonly in the sequence -Tyr-Xaa-Val-Gly-|-Gly, in the processing of the potyviral polyprotein.. Functionally, required for aphid transmission and also has proteolytic activity. Only cleaves a Gly-Gly dipeptide at its own C-terminus. Interacts with virions and aphid stylets. Acts as a suppressor of RNA-mediated gene silencing, also known as post-transcriptional gene silencing (PTGS), a mechanism of plant viral defense that limits the accumulation of viral RNAs. May have RNA-binding activity. Has helicase activity. It may be involved in replication. Its function is as follows. Indispensable for virus replication. Reduces the abundance of host transcripts related to jasmonic acid biosynthesis therefore altering the host defenses. In order to increase its own stability, decreases host protein degradation pathways. In terms of biological role, indispensable for virus replication. Functionally, mediates the cap-independent, EIF4E-dependent translation of viral genomic RNAs. Binds to the cap-binding site of host EIF4E and thus interferes with the host EIF4E-dependent mRNA export and translation. VPg-RNA directly binds EIF4E and is a template for transcription. Also forms trimeric complexes with EIF4E-EIF4G, which are templates for translation. Has RNA-binding and proteolytic activities. Its function is as follows. An RNA-dependent RNA polymerase that plays an essential role in the virus replication. In terms of biological role, involved in aphid transmission, cell-to-cell and systemis movement, encapsidation of the viral RNA and in the regulation of viral RNA amplification. This chain is Genome polyprotein, found in Beet mosaic virus (BtMV).